The following is a 25-amino-acid chain: Granule-bound starch synthase 1, chloroplastic/amyloplastic (25 aa).

Position 16 (lysine 16) interacts with ADP-alpha-D-glucose.

This sequence belongs to the glycosyltransferase 1 family. Bacterial/plant glycogen synthase subfamily. Expressed in endosperm.

The protein localises to the plastid. It localises to the chloroplast. The protein resides in the amyloplast. The enzyme catalyses an NDP-alpha-D-glucose + [(1-&gt;4)-alpha-D-glucosyl](n) = [(1-&gt;4)-alpha-D-glucosyl](n+1) + a ribonucleoside 5'-diphosphate + H(+). The protein operates within glycan biosynthesis; starch biosynthesis. In terms of biological role, required for the synthesis of amylose in endosperm. The chain is Granule-bound starch synthase 1, chloroplastic/amyloplastic from Fagopyrum esculentum (Common buckwheat).